A 129-amino-acid chain; its full sequence is Trefoil factor 2 (129 aa).

An N-terminal signal peptide occupies residues 1–23 (MGPRGLQLLAVLLALGLCAPAGA). Q24 bears the Pyrrolidone carboxylic acid mark. P-type domains lie at 29 to 73 (CQCS…FHPL) and 79 to 122 (EQCV…FFPI). Disulfide bonds link C29–C127, C31–C58, C42–C57, C52–C69, C81–C107, C91–C106, and C101–C118.

The protein localises to the secreted. In terms of biological role, inhibits gastrointestinal motility and gastric acid secretion. Could function as a structural component of gastric mucus, possibly by stabilizing glycoproteins in the mucus gel through interactions with carbohydrate side chains. The polypeptide is Trefoil factor 2 (TFF2) (Canis lupus familiaris (Dog)).